A 193-amino-acid chain; its full sequence is Protein CURVATURE THYLAKOID 1D, chloroplastic (193 aa).

Residues 1–51 (MELCTRSTTIITHLPASFNGHGYLAGKSVDRISLPLQRNVASLVLQSRTLR) constitute a chloroplast transit peptide. The Stromal portion of the chain corresponds to 52–117 (CSRKFPGETV…NDIKLDSDKT (66 aa)). Residues 118–138 (YSILLYGSGAIVALYLTSAIV) form a helical membrane-spanning segment. The Lumenal portion of the chain corresponds to 139 to 142 (SSLE). Residues 143 to 163 (AIPLFPKLMEVVGLGYTLWFT) traverse the membrane as a helical segment. The Stromal segment spans residues 164–193 (TRYLLFKRNREELKTKVSEIKKQVLGSDSE).

Belongs to the CURT family. Homo- and heterodimers and trimers.

It localises to the plastid. Its subcellular location is the chloroplast thylakoid membrane. Functionally, determines thylakoid architecture by inducing membrane curvature. The polypeptide is Protein CURVATURE THYLAKOID 1D, chloroplastic (CURT1D) (Arabidopsis thaliana (Mouse-ear cress)).